A 400-amino-acid chain; its full sequence is NADPH dehydrogenase 2 (400 aa).

The FMN site is built by Thr-38 and Gln-115. Substrate is bound by residues His-192 and Asn-195. The active-site Proton donor is the Tyr-197. Arg-244 and Arg-349 together coordinate FMN. Ser-353 is modified (phosphoserine). Tyr-376 contributes to the substrate binding site. A Phosphoserine modification is found at Ser-379.

It belongs to the NADH:flavin oxidoreductase/NADH oxidase family. Homodimer or heterodimer with OYE3. Requires FMN as cofactor.

The protein localises to the cytoplasm. The protein resides in the nucleus. Its subcellular location is the mitochondrion. It carries out the reaction A + NADPH + H(+) = AH2 + NADP(+). Functionally, flavin-dependent enoate reductase that catalyzes the chemo- and stereoslective hydrogenation of electron-poor alkenes. The enzyme is reduced by NADPH, and oxygen, quinones, and alpha,beta-unsaturated aldehydes and ketones can act as electron acceptors to complete catalytic turnover. The physiological oxidant remains elusive. Has an antioxidant activity, reducing reactive oxygen species (ROS) levels when overexpressed. Formation of OYE2-OYE3 heterodimers contribute to the induction of programmed cell death upon oxidative stress. In Saccharomyces cerevisiae (strain ATCC 204508 / S288c) (Baker's yeast), this protein is NADPH dehydrogenase 2.